A 129-amino-acid polypeptide reads, in one-letter code: Small ribosomal subunit protein uS11c (129 aa).

Belongs to the universal ribosomal protein uS11 family. As to quaternary structure, part of the 30S ribosomal subunit.

It is found in the plastid. The protein localises to the chloroplast. In Euglena gracilis, this protein is Small ribosomal subunit protein uS11c.